We begin with the raw amino-acid sequence, 725 residues long: Ribosomal RNA large subunit methyltransferase K/L (725 aa).

The region spanning 46-157 (VGYRLCLWSR…KGQAVLSLDL (112 aa)) is the THUMP domain.

It belongs to the methyltransferase superfamily. RlmKL family.

The protein resides in the cytoplasm. It catalyses the reaction guanosine(2445) in 23S rRNA + S-adenosyl-L-methionine = N(2)-methylguanosine(2445) in 23S rRNA + S-adenosyl-L-homocysteine + H(+). The catalysed reaction is guanosine(2069) in 23S rRNA + S-adenosyl-L-methionine = N(2)-methylguanosine(2069) in 23S rRNA + S-adenosyl-L-homocysteine + H(+). Functionally, specifically methylates the guanine in position 2445 (m2G2445) and the guanine in position 2069 (m7G2069) of 23S rRNA. In Stutzerimonas stutzeri (strain A1501) (Pseudomonas stutzeri), this protein is Ribosomal RNA large subunit methyltransferase K/L.